The sequence spans 2489 residues: Protein YPR117W (2489 aa).

A run of 2 helical transmembrane segments spans residues 19-39 (FMLF…WILM) and 128-148 (VLSI…LALT). Residues asparagine 191, asparagine 210, asparagine 311, asparagine 452, asparagine 468, asparagine 605, asparagine 638, asparagine 663, asparagine 698, asparagine 789, asparagine 835, asparagine 981, asparagine 1255, asparagine 1404, and asparagine 1476 are each glycosylated (N-linked (GlcNAc...) asparagine). The stretch at 1610 to 1676 (LTQEKLATER…RLHTVNTILS (67 aa)) forms a coiled coil. Residues 1685 to 1704 (PGGNTDGDSSSSLSDTDVNL) are disordered. Residues 1690-1704 (DGDSSSSLSDTDVNL) show a composition bias toward low complexity. Residues asparagine 1978 and asparagine 2189 are each glycosylated (N-linked (GlcNAc...) asparagine). Serine 2254 and serine 2278 each carry phosphoserine. Asparagine 2279 carries an N-linked (GlcNAc...) asparagine glycan. Positions 2451–2471 (SSTHSSDIRSINSDETYNEND) are enriched in polar residues. The tract at residues 2451–2489 (SSTHSSDIRSINSDETYNENDGNGVKPFYPVTSEFSKNK) is disordered.

The protein localises to the cell membrane. It is found in the endoplasmic reticulum membrane. The protein resides in the mitochondrion membrane. Functionally, tube-forming lipid transport protein which may bind to phosphatidylinositols and may affect phosphatidylinositol-4,5-bisphosphate (PtdIns-4,5-P2) distribution. The sequence is that of Protein YPR117W from Saccharomyces cerevisiae (strain ATCC 204508 / S288c) (Baker's yeast).